The sequence spans 153 residues: Sec-independent protein translocase protein TatB (153 aa).

Residues 1 to 21 (MFGISFSELLLVGLVALLVLG) traverse the membrane as a helical segment. The segment at 78 to 153 (MFAQNQHPET…HDSSLPPRAP (76 aa)) is disordered.

The protein belongs to the TatB family. In terms of assembly, the Tat system comprises two distinct complexes: a TatABC complex, containing multiple copies of TatA, TatB and TatC subunits, and a separate TatA complex, containing only TatA subunits. Substrates initially bind to the TatABC complex, which probably triggers association of the separate TatA complex to form the active translocon.

The protein resides in the cell inner membrane. Functionally, part of the twin-arginine translocation (Tat) system that transports large folded proteins containing a characteristic twin-arginine motif in their signal peptide across membranes. Together with TatC, TatB is part of a receptor directly interacting with Tat signal peptides. TatB may form an oligomeric binding site that transiently accommodates folded Tat precursor proteins before their translocation. This Pseudomonas savastanoi pv. phaseolicola (strain 1448A / Race 6) (Pseudomonas syringae pv. phaseolicola (strain 1448A / Race 6)) protein is Sec-independent protein translocase protein TatB.